Reading from the N-terminus, the 81-residue chain is Large ribosomal subunit protein bL27 (81 aa).

Residues 1–11 (MATSKSGGSSK) are compositionally biased toward polar residues. The tract at residues 1-20 (MATSKSGGSSKNGRDSISKR) is disordered.

This sequence belongs to the bacterial ribosomal protein bL27 family.

In Borreliella afzelii (strain PKo) (Borrelia afzelii), this protein is Large ribosomal subunit protein bL27.